The chain runs to 170 residues: tRNA-splicing endonuclease (170 aa).

Residues Tyr110, His116, and Lys147 contribute to the active site.

This sequence belongs to the tRNA-intron endonuclease family. Archaeal short subfamily. Homotetramer; although the tetramer contains four active sites, only two participate in the cleavage. Therefore, it should be considered as a dimer of dimers.

It catalyses the reaction pretRNA = a 3'-half-tRNA molecule with a 5'-OH end + a 5'-half-tRNA molecule with a 2',3'-cyclic phosphate end + an intron with a 2',3'-cyclic phosphate and a 5'-hydroxyl terminus.. Functionally, endonuclease that removes tRNA introns. Cleaves pre-tRNA at the 5'- and 3'-splice sites to release the intron. The products are an intron and two tRNA half-molecules bearing 2',3' cyclic phosphate and 5'-OH termini. Recognizes a pseudosymmetric substrate in which 2 bulged loops of 3 bases are separated by a stem of 4 bp. This chain is tRNA-splicing endonuclease, found in Pyrococcus furiosus (strain ATCC 43587 / DSM 3638 / JCM 8422 / Vc1).